The sequence spans 120 residues: UPF0342 protein LAF_1331 (120 aa).

The protein belongs to the UPF0342 family.

This chain is UPF0342 protein LAF_1331, found in Limosilactobacillus fermentum (strain NBRC 3956 / LMG 18251) (Lactobacillus fermentum).